A 231-amino-acid polypeptide reads, in one-letter code: DNA mismatch repair protein MutH (231 aa).

This sequence belongs to the MutH family.

The protein localises to the cytoplasm. Its function is as follows. Sequence-specific endonuclease that cleaves unmethylated GATC sequences. It is involved in DNA mismatch repair. In Klebsiella pneumoniae (strain 342), this protein is DNA mismatch repair protein MutH.